A 493-amino-acid polypeptide reads, in one-letter code: Alpha-amylase-related protein (493 aa).

Positions Met-1–Ala-19 are cleaved as a signal peptide. Position 20 is a pyrrolidone carboxylic acid (Gln-20). Residues Cys-47 and Cys-103 are joined by a disulfide bond. Ca(2+) is bound by residues Asn-117, Gln-168, and Asp-177. A disulfide bridge connects residues Cys-156 and Cys-170. A chloride-binding site is contributed by Arg-205. Asp-207 (nucleophile) is an active-site residue. His-211 serves as a coordination point for Ca(2+). The Proton donor role is filled by Glu-244. Chloride is bound by residues Asn-307 and Arg-342. 3 disulfide bridges follow: Cys-375–Cys-381, Cys-417–Cys-440, and Cys-447–Cys-459.

This sequence belongs to the glycosyl hydrolase 13 family. In terms of assembly, monomer. It depends on Ca(2+) as a cofactor. The cofactor is chloride.

It is found in the secreted. The enzyme catalyses Endohydrolysis of (1-&gt;4)-alpha-D-glucosidic linkages in polysaccharides containing three or more (1-&gt;4)-alpha-linked D-glucose units.. The sequence is that of Alpha-amylase-related protein (Amyrel) from Drosophila teissieri (Fruit fly).